Reading from the N-terminus, the 698-residue chain is tRNA (guanine(37)-N(1))-methyltransferase (698 aa).

The segment at 233 to 254 is disordered; the sequence is DSTAHDSVQRNEGKTPKGPLDG. The span at 234-247 shows a compositional bias: basic and acidic residues; sequence STAHDSVQRNEGKT. S-adenosyl-L-methionine is bound by residues arginine 394, 432 to 433, and 459 to 460; these read DI and DA. 2 disordered regions span residues 500–522 and 534–582; these read PDQN…GHVD and KKKL…DAPR. 3 stretches are compositionally biased toward basic and acidic residues: residues 513–522, 539–550, and 569–582; these read RESDRVGHVD, HADTNDPLEERP, and TNND…DAPR. Asparagine 603 provides a ligand contact to S-adenosyl-L-methionine.

This sequence belongs to the class I-like SAM-binding methyltransferase superfamily. TRM5/TYW2 family. Monomer.

Its subcellular location is the mitochondrion matrix. It is found in the nucleus. It localises to the cytoplasm. It carries out the reaction guanosine(37) in tRNA + S-adenosyl-L-methionine = N(1)-methylguanosine(37) in tRNA + S-adenosyl-L-homocysteine + H(+). Functionally, specifically methylates the N1 position of guanosine-37 in various cytoplasmic and mitochondrial tRNAs. Methylation is not dependent on the nature of the nucleoside 5' of the target nucleoside. This is the first step in the biosynthesis of wybutosine (yW), a modified base adjacent to the anticodon of tRNAs and required for accurate decoding. This Plasmodium knowlesi (strain H) protein is tRNA (guanine(37)-N(1))-methyltransferase.